Here is a 294-residue protein sequence, read N- to C-terminus: Uracil-DNA glycosylase (294 aa).

The active-site Proton acceptor is aspartate 139.

The protein belongs to the uracil-DNA glycosylase (UDG) superfamily. UNG family.

It localises to the host nucleus. The catalysed reaction is Hydrolyzes single-stranded DNA or mismatched double-stranded DNA and polynucleotides, releasing free uracil.. Its function is as follows. Excises uracil residues from the DNA which can arise as a result of misincorporation of dUMP residues by DNA polymerase or deamination of cytosines. Therefore may reduce deleterious uracil incorporation into the viral genome, particularly in terminally differentiated cells which lack DNA repair enzymes. This chain is Uracil-DNA glycosylase (UL2), found in Human herpesvirus 2 (strain 333) (HHV-2).